The sequence spans 242 residues: Myogenic factor 6 (242 aa).

The tract at residues 31-63 (SPLYPGSDGTLSPCQDQMPQEAGSDSSGEEHVL) is disordered. The segment covering 39–56 (GTLSPCQDQMPQEAGSDS) has biased composition (polar residues). The 52-residue stretch at 93–144 (DRRKAATLRERRRLKKINEAFEALKRRTVANPNQRLPKVEILRSAISYIERL) folds into the bHLH domain.

Efficient DNA binding requires dimerization with another bHLH protein. Interacts with CSRP3. Skeletal muscle.

It is found in the nucleus. Involved in muscle differentiation (myogenic factor). Induces fibroblasts to differentiate into myoblasts. Probable sequence specific DNA-binding protein. The sequence is that of Myogenic factor 6 (Myf6) from Mus musculus (Mouse).